Reading from the N-terminus, the 364-residue chain is D-alanine--D-alanine ligase A (364 aa).

One can recognise an ATP-grasp domain in the interval 145 to 348; sequence KRLLRDAGLN…YTDLITRLIE (204 aa). 175-230 is a binding site for ATP; sequence ESKLGLPLFVKPANQGSSVGVSKVTSEEQYTIAVDLAFEFDHKVIVEQGIKGREIE. Mg(2+)-binding residues include Asp302, Glu315, and Asn317.

It belongs to the D-alanine--D-alanine ligase family. The cofactor is Mg(2+). Mn(2+) is required as a cofactor.

The protein localises to the cytoplasm. The enzyme catalyses 2 D-alanine + ATP = D-alanyl-D-alanine + ADP + phosphate + H(+). Its pathway is cell wall biogenesis; peptidoglycan biosynthesis. Cell wall formation. The protein is D-alanine--D-alanine ligase A of Escherichia coli O6:H1 (strain CFT073 / ATCC 700928 / UPEC).